Consider the following 119-residue polypeptide: Large ribosomal subunit protein uL18 (119 aa).

The protein belongs to the universal ribosomal protein uL18 family. As to quaternary structure, part of the 50S ribosomal subunit; part of the 5S rRNA/L5/L18/L25 subcomplex. Contacts the 5S and 23S rRNAs.

Its function is as follows. This is one of the proteins that bind and probably mediate the attachment of the 5S RNA into the large ribosomal subunit, where it forms part of the central protuberance. The protein is Large ribosomal subunit protein uL18 of Xanthomonas oryzae pv. oryzae (strain PXO99A).